The sequence spans 122 residues: Large ribosomal subunit protein bL12 (122 aa).

It belongs to the bacterial ribosomal protein bL12 family. As to quaternary structure, homodimer. Part of the ribosomal stalk of the 50S ribosomal subunit. Forms a multimeric L10(L12)X complex, where L10 forms an elongated spine to which 2 to 4 L12 dimers bind in a sequential fashion. Binds GTP-bound translation factors.

Forms part of the ribosomal stalk which helps the ribosome interact with GTP-bound translation factors. Is thus essential for accurate translation. The polypeptide is Large ribosomal subunit protein bL12 (Yersinia enterocolitica serotype O:8 / biotype 1B (strain NCTC 13174 / 8081)).